The following is a 303-amino-acid chain: Vesicle-trafficking protein SEC22c (303 aa).

Residues 1–183 (MSVIFFACVV…EPAPNFRMEP (183 aa)) lie on the Cytoplasmic side of the membrane. A Longin domain is found at 8–119 (CVVRVRDGLP…YAFLEFDSII (112 aa)). A helical transmembrane segment spans residues 184 to 204 (VTALGILSLILNIMCAALNLI). At 205-223 (RGVHLAEHSLQVAHEEIGN) the chain is on the lumenal side. A helical transmembrane segment spans residues 224 to 244 (ILAFLVPFVACIFQCYLYLFY). Topologically, residues 245 to 248 (SPAR) are cytoplasmic. Residues 249-269 (TMKVVLMLLFICLGNMYLHGL) form a helical membrane-spanning segment. A topological domain (lumenal) is located at residue arginine 270. The helical transmembrane segment at 271 to 291 (NLWQILFHIGVAFLSSYQILT) threads the bilayer. Over 292–303 (RQLQEKQSDCGV) the chain is Cytoplasmic.

It belongs to the synaptobrevin family. Ubiquitously expressed.

Its subcellular location is the endoplasmic reticulum membrane. Its function is as follows. May be involved in vesicle transport between the ER and the Golgi complex. This chain is Vesicle-trafficking protein SEC22c (SEC22C), found in Homo sapiens (Human).